The primary structure comprises 364 residues: Heavy metal-associated isoprenylated plant protein 35 (364 aa).

Residues 1 to 12 (MATDEMKSETKK) are compositionally biased toward basic and acidic residues. The segment at 1 to 33 (MATDEMKSETKKTEHKQKQSTQIKQDLPPPTIP) is disordered. In terms of domain architecture, HMA spans 39 to 102 (YKSCTLKVSI…KLNKAGKNAE (64 aa)). Residues cysteine 50 and cysteine 53 each contribute to the a metal cation site. The disordered stretch occupies residues 101 to 265 (AEQLPEIPDP…PPTATDYDRP (165 aa)). Basic and acidic residues predominate over residues 111–122 (VDNKPKPVDPKE). Positions 134–144 (QITNEATSSGI) are enriched in polar residues. Basic and acidic residues-rich tracts occupy residues 154–169 (ECDK…EKCL) and 180–198 (VKEE…KEES). Over residues 237–253 (SLATTNNPTDGPARTQS) the composition is skewed to polar residues. The residue at position 361 (cysteine 361) is a Cysteine methyl ester. A lipid anchor (S-farnesyl cysteine) is attached at cysteine 361. Positions 362–364 (AIM) are cleaved as a propeptide — removed in mature form.

The protein belongs to the HIPP family.

Functionally, heavy-metal-binding protein. In Arabidopsis thaliana (Mouse-ear cress), this protein is Heavy metal-associated isoprenylated plant protein 35.